The sequence spans 544 residues: MAKRIIYNENARRALEKGIDILAESVAVTLGPKGRNVVLEKKFGSPQIINDGVTIAKEIELEDHIENTGVALIRQAASKTNDAAGDGTTTATVLAHAMVKAGLRNVAAGANAITLKKGIDKASDFLVGKIKDMAKPIADSNAIAQVGTISAGNDEEVGKMIADAMDKVGKEGVISLEEGKSMETELEVTEGMRFDKGYISPYFATDTERMEAVLDEPYILLTDKKIGLVQDLVPVLEQIARTGKPLLIIAEDIEKEALATLVVNRLRGVLNVAAVKAPGFGDRRKAMLEDMAVLTNGQLITEDAGLKLENAKLEMLGTARRITINKDTTTIVAEGNEAAVGARCEQIKKQMDETDSTYDKEKLQERLAKLAGGVAVVKVGAATETEMKDKKLRLEDAINATKAAVEEGIVPGGGTTLAHLAPALEEWANGNLSGEELIGANIVAAALTAPLMRIAENAGANGAVVAENVKSRSNNEGYNAANGDYVDMLAAGIVDPAKVTRSGLQNAASIAGMVLTTECIVADLPEKKDAAPAGGGMGGGDFDY.

ATP is bound by residues threonine 29–proline 32, aspartate 86–threonine 90, glycine 413, asparagine 479–alanine 481, and aspartate 495.

The protein belongs to the chaperonin (HSP60) family. In terms of assembly, forms a cylinder of 14 subunits composed of two heptameric rings stacked back-to-back. Interacts with the co-chaperonin GroES.

It is found in the cytoplasm. It carries out the reaction ATP + H2O + a folded polypeptide = ADP + phosphate + an unfolded polypeptide.. Its function is as follows. Together with its co-chaperonin GroES, plays an essential role in assisting protein folding. The GroEL-GroES system forms a nano-cage that allows encapsulation of the non-native substrate proteins and provides a physical environment optimized to promote and accelerate protein folding. The polypeptide is Chaperonin GroEL 1 (Synechococcus sp. (strain CC9902)).